Reading from the N-terminus, the 360-residue chain is uncharacterized protein (360 aa).

One can recognise an ABC transporter domain in the interval leucine 4–isoleucine 235. Position 37 to 44 (glycine 37 to serine 44) interacts with ATP.

Belongs to the ABC transporter superfamily.

This is an uncharacterized protein from Escherichia coli O6:H1 (strain CFT073 / ATCC 700928 / UPEC).